The sequence spans 1828 residues: Chromodomain-helicase-DNA-binding protein 2 (1828 aa).

Over residues 1 to 14 the composition is skewed to basic and acidic residues; sequence MMRNKDKSQEEDSS. Positions 1 to 243 are disordered; it reads MMRNKDKSQE…EDDDFETDSD (243 aa). Residues 15–75 show a composition bias toward low complexity; it reads LHSNASSHSA…SESESAGSKS (61 aa). 3 stretches are compositionally biased toward basic and acidic residues: residues 81–101, 115–128, and 146–155; these read EAKE…KMWE, SRQE…KEEA, and KKQEKWKQEP. Residues 175 to 204 are compositionally biased toward basic residues; the sequence is VKARRPVPRRTVPKPRVKKQPKTQRGKRKK. A phosphoserine mark is found at Ser-207 and Ser-208. A compositionally biased stretch (acidic residues) spans 234-243; that stretch reads EDDDFETDSD. Position 240 is a phosphothreonine (Thr-240). A Phosphoserine modification is found at Ser-242. Chromo domains lie at 261–353 and 378–456; these read ETIE…QWLG and QIVE…IPTR. The Helicase ATP-binding domain maps to 496 to 666; that stretch reads AHSWCKNNSV…WSLLHFIMPE (171 aa). Residue 509–516 participates in ATP binding; the sequence is DEMGLGKT. A DEAH box motif is present at residues 617–620; that stretch reads DEAH. The region spanning 795–946 is the Helicase C-terminal domain; the sequence is LLDKLLTRLR…HLVIQRMDTT (152 aa). 4 disordered regions span residues 1030–1124, 1331–1462, 1556–1638, and 1680–1828; these read EDEE…RSVR, VTGG…DEDD, HKKR…ADRG, and HMDA…VRKT. Positions 1037–1065 are enriched in basic and acidic residues; it reads ERPHKDWDEIIPEEQRKKVEEEERQKELE. Phosphoserine is present on residues Ser-1085, Ser-1087, Ser-1365, and Ser-1386. Positions 1347 to 1371 are enriched in basic and acidic residues; the sequence is KKENKVPRLKEEHGIELSSPRHSDN. 2 stretches are compositionally biased toward basic and acidic residues: residues 1396–1431 and 1565–1574; these read ENKE…KSGD and EQKKKDDVTG. A CHD1 helical C-terminal domain (CHCT) region spans residues 1464–1566; that stretch reads LDQETFSICK…KKRSQEEEEQ (103 aa). A compositionally biased stretch (polar residues) spans 1584–1601; that stretch reads SGSSRDSLISQSHTSHNL. Composition is skewed to basic and acidic residues over residues 1698-1720, 1739-1749, 1760-1772, and 1795-1814; these read RPYD…DRHH, QDFRRMSDHRP, DHYR…KLGE, and SPHD…RSLE. At Ser-1807 the chain carries Phosphoserine.

It belongs to the SNF2/RAD54 helicase family. As to quaternary structure, interacts with MYOD1. Interacts with histone H3.3.

It is found in the nucleus. The catalysed reaction is ATP + H2O = ADP + phosphate + H(+). Functionally, ATP-dependent chromatin-remodeling factor that specifically binds to the promoter of target genes, leading to chromatin remodeling, possibly by promoting deposition of histone H3.3. Involved in myogenesis via interaction with MYOD1: binds to myogenic gene regulatory sequences and mediates incorporation of histone H3.3 prior to the onset of myogenic gene expression, promoting their expression. This Homo sapiens (Human) protein is Chromodomain-helicase-DNA-binding protein 2 (CHD2).